We begin with the raw amino-acid sequence, 92 residues long: Small ribosomal subunit protein uS19 (92 aa).

The protein belongs to the universal ribosomal protein uS19 family.

Functionally, protein S19 forms a complex with S13 that binds strongly to the 16S ribosomal RNA. The protein is Small ribosomal subunit protein uS19 (rpsS) of Halalkalibacterium halodurans (strain ATCC BAA-125 / DSM 18197 / FERM 7344 / JCM 9153 / C-125) (Bacillus halodurans).